The chain runs to 216 residues: Probable GTP-binding protein EngB (216 aa).

The EngB-type G domain maps to 24–205 (ATPEIAFVGR…WARLAALAAE (182 aa)). Residues 32 to 39 (GRSNVGKS), 59 to 63 (GRTRA), 86 to 89 (DLPG), 153 to 156 (TKTD), and 184 to 186 (FSA) contribute to the GTP site. Mg(2+)-binding residues include Ser39 and Thr61.

It belongs to the TRAFAC class TrmE-Era-EngA-EngB-Septin-like GTPase superfamily. EngB GTPase family. It depends on Mg(2+) as a cofactor.

Necessary for normal cell division and for the maintenance of normal septation. This Anaeromyxobacter dehalogenans (strain 2CP-1 / ATCC BAA-258) protein is Probable GTP-binding protein EngB.